The chain runs to 232 residues: Phosphoribosylformylglycinamidine synthase subunit PurQ (232 aa).

One can recognise a Glutamine amidotransferase type-1 domain in the interval 3-232 (FAVIVFPGSN…SLVASALAVV (230 aa)). The active-site Nucleophile is the Cys-86. Residues His-203 and Glu-205 contribute to the active site.

As to quaternary structure, part of the FGAM synthase complex composed of 1 PurL, 1 PurQ and 2 PurS subunits.

Its subcellular location is the cytoplasm. It carries out the reaction N(2)-formyl-N(1)-(5-phospho-beta-D-ribosyl)glycinamide + L-glutamine + ATP + H2O = 2-formamido-N(1)-(5-O-phospho-beta-D-ribosyl)acetamidine + L-glutamate + ADP + phosphate + H(+). The catalysed reaction is L-glutamine + H2O = L-glutamate + NH4(+). The protein operates within purine metabolism; IMP biosynthesis via de novo pathway; 5-amino-1-(5-phospho-D-ribosyl)imidazole from N(2)-formyl-N(1)-(5-phospho-D-ribosyl)glycinamide: step 1/2. Functionally, part of the phosphoribosylformylglycinamidine synthase complex involved in the purines biosynthetic pathway. Catalyzes the ATP-dependent conversion of formylglycinamide ribonucleotide (FGAR) and glutamine to yield formylglycinamidine ribonucleotide (FGAM) and glutamate. The FGAM synthase complex is composed of three subunits. PurQ produces an ammonia molecule by converting glutamine to glutamate. PurL transfers the ammonia molecule to FGAR to form FGAM in an ATP-dependent manner. PurS interacts with PurQ and PurL and is thought to assist in the transfer of the ammonia molecule from PurQ to PurL. This chain is Phosphoribosylformylglycinamidine synthase subunit PurQ, found in Gloeobacter violaceus (strain ATCC 29082 / PCC 7421).